A 370-amino-acid polypeptide reads, in one-letter code: 4-hydroxy-3-methylbut-2-en-1-yl diphosphate synthase (flavodoxin) (370 aa).

Residues Cys268, Cys271, Cys303, and Glu310 each coordinate [4Fe-4S] cluster.

The protein belongs to the IspG family. It depends on [4Fe-4S] cluster as a cofactor.

It carries out the reaction (2E)-4-hydroxy-3-methylbut-2-enyl diphosphate + oxidized [flavodoxin] + H2O + 2 H(+) = 2-C-methyl-D-erythritol 2,4-cyclic diphosphate + reduced [flavodoxin]. It participates in isoprenoid biosynthesis; isopentenyl diphosphate biosynthesis via DXP pathway; isopentenyl diphosphate from 1-deoxy-D-xylulose 5-phosphate: step 5/6. Its function is as follows. Converts 2C-methyl-D-erythritol 2,4-cyclodiphosphate (ME-2,4cPP) into 1-hydroxy-2-methyl-2-(E)-butenyl 4-diphosphate. This is 4-hydroxy-3-methylbut-2-en-1-yl diphosphate synthase (flavodoxin) from Bacillus licheniformis (strain ATCC 14580 / DSM 13 / JCM 2505 / CCUG 7422 / NBRC 12200 / NCIMB 9375 / NCTC 10341 / NRRL NRS-1264 / Gibson 46).